The sequence spans 557 residues: Kelch repeat and BTB domain-containing protein 2 (557 aa).

Residues 26–95 (CDVIITIRDG…LYNRHISSMN (70 aa)) form the BTB domain. The BACK domain maps to 143–223 (IVKYIKRMLM…CIDIQNLDKK (81 aa)). 3 Kelch repeats span residues 305-352 (EIII…VIDD), 353-399 (TIYA…VLDQ), and 415-464 (SVHA…SHED).

As to quaternary structure, interacts (via BTB domain) with host CUL3.

It localises to the host cytoplasm. Probable substrate-specific adapter of CUL3-containing E3 ubiquitin-protein ligases which mediate the ubiquitination and subsequent proteasomal degradation of host target proteins. This chain is Kelch repeat and BTB domain-containing protein 2 (KBTB2), found in Cowpox virus (strain Brighton Red) (CPV).